The sequence spans 512 residues: Chromatin assembly factor 1 subunit B (512 aa).

WD repeat units lie at residues 16–56 (DDHT…SSTK), 65–105 (RHTQ…TTLA), 126–165 (SMGSEIYDLCWSVDSNFLIAGAMDNSLRLYDAHTGQLLTQ), and 168–207 (DHSHYVQGVCWDPLNQYIVSESSDRSICLYEIQEEKKNPK). The segment covering 239–257 (DESSGISEPIETSNNNESP) has biased composition (polar residues). The tract at residues 239-261 (DESSGISEPIETSNNNESPVSKH) is disordered. WD repeat units lie at residues 373–413 (SFSN…PFYR) and 417–458 (LHYS…VKSQ). Residues 459–512 (HKISLPEKRSASPSSIDDSQDNTAGGPATTTLIPRKVESSKVSKKRIAPTPVYP) are disordered. 3 positions are modified to phosphoserine: serine 468, serine 470, and serine 473. Positions 469–490 (ASPSSIDDSQDNTAGGPATTTL) are enriched in polar residues.

Belongs to the WD repeat HIR1 family. As to quaternary structure, component of chromatin assembly factor 1 (CAF-1), composed of pcf1, pcf2 and pcf3. Interacts with pcn1/PCNA during S-phase. Interacts with swi6 at the G1/S-phase transition and early S-phase, but not in the G2 phase. The CAF-1 complex interacts with histone H3-H4 dimers.

The protein resides in the cytoplasm. It localises to the nucleus. Its function is as follows. Acts as a component of the histone chaperone complex chromatin assembly factor 1 (CAF-1), which assembles histone octamers onto DNA during replication and repair. CAF-1 performs the first step of the nucleosome assembly process, bringing newly synthesized histones H3 and H4 to replicating DNA; histones H2A/H2B can bind to this chromatin precursor subsequent to DNA replication to complete the histone octamer. Plays a role in the maintenance of heterochromatin. The protein is Chromatin assembly factor 1 subunit B of Schizosaccharomyces pombe (strain 972 / ATCC 24843) (Fission yeast).